Reading from the N-terminus, the 164-residue chain is Protein SprT (164 aa).

Residues 14-156 (QLAESFFKRP…LCRRCRQTLV (143 aa)) enclose the SprT-like domain. Histidine 69 serves as a coordination point for Zn(2+). Glutamate 70 is a catalytic residue. Position 73 (histidine 73) interacts with Zn(2+).

It belongs to the SprT family. It depends on Zn(2+) as a cofactor.

Its subcellular location is the cytoplasm. In Pseudomonas fluorescens (strain ATCC BAA-477 / NRRL B-23932 / Pf-5), this protein is Protein SprT.